The sequence spans 316 residues: Apolipoprotein E (316 aa).

Residues 1–18 (MKVLWVALVVALLAGCQA) form the signal peptide. 8 consecutive repeat copies span residues 79-100 (VLME…GQLA), 101-122 (PMAQ…ARLG), 123-144 (SDME…AMLG), 145-166 (QSTE…KRLL), 167-188 (RDAD…EGAE), 189-210 (RSVS…SRAA), 211-232 (TLST…QKLH), and 233-254 (GRLE…QQLE). The tract at residues 79–254 (VLMEETMKEV…RLDKMRQQLE (176 aa)) is 8 X 22 AA approximate tandem repeats. Methionine sulfoxide is present on methionine 142. At serine 146 the chain carries Phosphoserine. Positions 157–167 (HLRKLRKRLLR) are LDL and other lipoprotein receptors binding. Residue 161-164 (LRKR) participates in heparin binding. Positions 209 to 289 (AATLSTQVGQ…SWFEPLVEDM (81 aa)) are lipid-binding and lipoprotein association. O-linked (GalNAc...) threonine glycosylation occurs at threonine 211. Heparin is bound at residue 228-235 (RQKLHGRL). The homooligomerization stretch occupies residues 265–316 (SQIRLQAEAFQARLRSWFEPLVEDMQRQWAGLVEKVQLALHLSPTSPPSENH). The segment at 277-289 (RLRSWFEPLVEDM) is specificity for association with VLDL.

The protein belongs to the apolipoprotein A1/A4/E family. In terms of assembly, homotetramer. May interact with ABCA1; functionally associated with ABCA1 in the biogenesis of HDLs. May interact with APP/A4 amyloid-beta peptide; the interaction is extremely stable in vitro but its physiological significance is unclear. May interact with MAPT. May interact with MAP2. In the cerebrospinal fluid, interacts with secreted SORL1. Interacts with PMEL; this allows the loading of PMEL luminal fragment on ILVs to induce fibril nucleation. Post-translationally, APOE exists as multiple glycosylated and sialylated glycoforms within cells and in plasma. The extent of glycosylation and sialylation are tissue and context specific. In terms of processing, glycated in plasma VLDL. Phosphorylated by FAM20C in the extracellular medium.

The protein localises to the secreted. It is found in the extracellular space. Its subcellular location is the extracellular matrix. The protein resides in the extracellular vesicle. It localises to the endosome. The protein localises to the multivesicular body. Its function is as follows. APOE is an apolipoprotein, a protein associating with lipid particles, that mainly functions in lipoprotein-mediated lipid transport between organs via the plasma and interstitial fluids. APOE is a core component of plasma lipoproteins and is involved in their production, conversion and clearance. Apolipoproteins are amphipathic molecules that interact both with lipids of the lipoprotein particle core and the aqueous environment of the plasma. As such, APOE associates with chylomicrons, chylomicron remnants, very low density lipoproteins (VLDL) and intermediate density lipoproteins (IDL) but shows a preferential binding to high-density lipoproteins (HDL). It also binds a wide range of cellular receptors including the LDL receptor/LDLR and the very low-density lipoprotein receptor/VLDLR that mediate the cellular uptake of the APOE-containing lipoprotein particles. Finally, APOE also has a heparin-binding activity and binds heparan-sulfate proteoglycans on the surface of cells, a property that supports the capture and the receptor-mediated uptake of APOE-containing lipoproteins by cells. The polypeptide is Apolipoprotein E (APOE) (Ovis aries musimon (Mouflon)).